Here is a 143-residue protein sequence, read N- to C-terminus: Large ribosomal subunit protein uL13 (143 aa).

This sequence belongs to the universal ribosomal protein uL13 family. In terms of assembly, part of the 50S ribosomal subunit.

This protein is one of the early assembly proteins of the 50S ribosomal subunit, although it is not seen to bind rRNA by itself. It is important during the early stages of 50S assembly. The sequence is that of Large ribosomal subunit protein uL13 from Methylacidiphilum infernorum (isolate V4) (Methylokorus infernorum (strain V4)).